A 313-amino-acid polypeptide reads, in one-letter code: MDTSTNLDIGAQLIVEECPSTYSLTGMPDIKIEHPLDPNSEEGSAQGVAMGMKFILPNRFDMNVCSRFVKSLNEEDSKNIQDQVNSDLEVASVLFKAECNIHTSPSPGIQVRHVYTPSTTKHFSPIKQSTTLTNKHRGNEVSTTPLLANSLSVHQLAAQGEMLYLATRIEQENVINHTDEEGFTPLMWAAAHGQIAVVEFLLQNGADPQLLGKGRESALSLACSKGYTDIVKMLLDCGVDVNEYDWNGGTPLLYAVHGNHVKCVKMLLESGADPTIETDSGYNSMDLAVALGYRSVQQVIESHLLKLLQNIKE.

ANK repeat units lie at residues 148–180, 181–213, 214–246, 247–279, and 280–313; these read ANSL…HTDE, EGFT…LLGK, GRES…EYDW, NGGT…IETD, and SGYN…NIKE.

Interacts (via ANK repeats) with CCDC8 (via PxLPxI/L motif); mediates the interaction with the 3M complex which is composed of CCDC8, CUL7 and OBSL1. Interacts (via ANK repeats) with HDAC4 (via PxLPxI/L motif). Interacts (via ANK repeats) with HDAC5 (via PxLPxI/L motif). Interacts (via ANK repeats) with LRP2/megalin (via PxLPxI/L motif). Interacts (via ANK repeats) with RFX7 (via PxLPxI/L motif). Interacts with AHRR. Interacts with NEK6.

The protein localises to the cytoplasm. It localises to the cytoskeleton. It is found in the membrane. Functionally, may regulate the interaction between the 3M complex and the histone deacetylases HDAC4 and HDAC5. May also regulate LRP2/megalin. The chain is Ankyrin repeat family A protein 2 (ANKRA2) from Homo sapiens (Human).